The following is a 642-amino-acid chain: Threonine--tRNA ligase (642 aa).

The 61-residue stretch at 1–61 folds into the TGS domain; sequence MPIITLPDGS…SEDANLEIIT (61 aa). The catalytic stretch occupies residues 243–534; the sequence is DHRKIGKALD…ITEEYAGFFP (292 aa). Zn(2+) contacts are provided by Cys-334, His-385, and His-511.

This sequence belongs to the class-II aminoacyl-tRNA synthetase family. In terms of assembly, homodimer. Requires Zn(2+) as cofactor.

Its subcellular location is the cytoplasm. It carries out the reaction tRNA(Thr) + L-threonine + ATP = L-threonyl-tRNA(Thr) + AMP + diphosphate + H(+). Its function is as follows. Catalyzes the attachment of threonine to tRNA(Thr) in a two-step reaction: L-threonine is first activated by ATP to form Thr-AMP and then transferred to the acceptor end of tRNA(Thr). Also edits incorrectly charged L-seryl-tRNA(Thr). This chain is Threonine--tRNA ligase, found in Histophilus somni (strain 129Pt) (Haemophilus somnus).